The following is a 434-amino-acid chain: Trigger factor (434 aa).

Residues 160–245 form the PPIase FKBP-type domain; that stretch reads DDKVKMNFIG…LTEVQAANLP (86 aa).

This sequence belongs to the FKBP-type PPIase family. Tig subfamily.

It is found in the cytoplasm. It carries out the reaction [protein]-peptidylproline (omega=180) = [protein]-peptidylproline (omega=0). Functionally, involved in protein export. Acts as a chaperone by maintaining the newly synthesized protein in an open conformation. Functions as a peptidyl-prolyl cis-trans isomerase. This chain is Trigger factor, found in Shewanella frigidimarina (strain NCIMB 400).